The primary structure comprises 134 residues: Alkaline proteinase inhibitor (134 aa).

Residues 1 to 26 form the signal peptide; the sequence is MVFAAWYLKFAFFVALAFSIIGGSMA. A disulfide bond links Cys50 and Cys73.

The protein belongs to the protease inhibitor I38 family.

Its subcellular location is the periplasm. Its function is as follows. Inhibitor of the alkaline protease. This chain is Alkaline proteinase inhibitor (inh), found in Photorhabdus luminescens (Xenorhabdus luminescens).